The chain runs to 582 residues: L-fucose isomerase (582 aa).

Active-site proton acceptor residues include glutamate 333 and aspartate 357. Residues glutamate 333, aspartate 357, and histidine 520 each coordinate Mn(2+).

Belongs to the L-fucose isomerase family. Mn(2+) serves as cofactor.

The protein localises to the cytoplasm. It catalyses the reaction L-fucose = L-fuculose. The protein operates within carbohydrate degradation; L-fucose degradation; L-lactaldehyde and glycerone phosphate from L-fucose: step 1/3. Its function is as follows. Converts the aldose L-fucose into the corresponding ketose L-fuculose. The sequence is that of L-fucose isomerase from Vibrio vulnificus (strain YJ016).